The primary structure comprises 448 residues: Signal recognition particle protein (448 aa).

Residues 101-108, 182-186, and 240-243 each bind GTP; these read GLQGSGKT, DSAGR, and SKFD.

The protein belongs to the GTP-binding SRP family. SRP54 subfamily. As to quaternary structure, part of the signal recognition particle protein translocation system, which is composed of SRP and FtsY. SRP is a ribonucleoprotein composed of Ffh and a 4.5S RNA molecule.

The protein resides in the cytoplasm. It catalyses the reaction GTP + H2O = GDP + phosphate + H(+). Involved in targeting and insertion of nascent membrane proteins into the cytoplasmic membrane. Binds to the hydrophobic signal sequence of the ribosome-nascent chain (RNC) as it emerges from the ribosomes. The SRP-RNC complex is then targeted to the cytoplasmic membrane where it interacts with the SRP receptor FtsY. Interaction with FtsY leads to the transfer of the RNC complex to the Sec translocase for insertion into the membrane, the hydrolysis of GTP by both Ffh and FtsY, and the dissociation of the SRP-FtsY complex into the individual components. The protein is Signal recognition particle protein of Helicobacter pylori (strain J99 / ATCC 700824) (Campylobacter pylori J99).